We begin with the raw amino-acid sequence, 920 residues long: Isoleucine--tRNA ligase (920 aa).

The 'HIGH' region signature appears at 58 to 68 (PYANGHLHLGH). Residue E569 coordinates L-isoleucyl-5'-AMP. The 'KMSKS' region motif lies at 610–614 (KMSKS). K613 is an ATP binding site. Residues C895, C898, C910, and C913 each coordinate Zn(2+).

It belongs to the class-I aminoacyl-tRNA synthetase family. IleS type 1 subfamily. Monomer. Requires Zn(2+) as cofactor.

It localises to the cytoplasm. The enzyme catalyses tRNA(Ile) + L-isoleucine + ATP = L-isoleucyl-tRNA(Ile) + AMP + diphosphate. In terms of biological role, catalyzes the attachment of isoleucine to tRNA(Ile). As IleRS can inadvertently accommodate and process structurally similar amino acids such as valine, to avoid such errors it has two additional distinct tRNA(Ile)-dependent editing activities. One activity is designated as 'pretransfer' editing and involves the hydrolysis of activated Val-AMP. The other activity is designated 'posttransfer' editing and involves deacylation of mischarged Val-tRNA(Ile). This is Isoleucine--tRNA ligase from Helicobacter pylori (strain Shi470).